A 421-amino-acid polypeptide reads, in one-letter code: Tubulin gamma-3 chain (421 aa).

94 to 100 (AGGTGSG) provides a ligand contact to GTP.

This sequence belongs to the tubulin family.

Its subcellular location is the cytoplasm. The protein localises to the cytoskeleton. The protein resides in the microtubule organizing center. Tubulin is the major constituent of microtubules. The gamma chain is found at microtubule organizing centers (MTOC) such as the spindle poles, suggesting that it is involved in the minus-end nucleation of microtubule assembly. The sequence is that of Tubulin gamma-3 chain (TUBG3) from Zea mays (Maize).